The chain runs to 419 residues: Coiled-coil domain-containing protein 85C (419 aa).

At Ala-2 the chain carries N-acetylalanine. 2 coiled-coil regions span residues 22-88 (ELLR…RELC) and 118-159 (HEVA…AALA). Disordered stretches follow at residues 162-268 (GAAS…DPSS) and 307-348 (HSES…AGQK). Residues 164–175 (ASGGGGGGGGAG) are compositionally biased toward gly residues. A compositionally biased stretch (low complexity) spans 176–189 (SRSSIDSQASLSGP). Ser-178 carries the phosphoserine modification. Residues 224–233 (PPPLLPPGPH) show a composition bias toward pro residues. Ser-246 carries the phosphoserine modification. The segment covering 307 to 325 (HSESQLASLPPSYQDSLQN) has biased composition (polar residues). A compositionally biased stretch (pro residues) spans 329-338 (CPAPELPSPP).

This sequence belongs to the CCDC85 family. May interact with ARVCF, CTNND1, CTNND2 and PKP4.

It localises to the cell junction. The protein localises to the tight junction. The protein resides in the adherens junction. Functionally, may play a role in cell-cell adhesion and epithelium development through its interaction with proteins of the beta-catenin family. May play an important role in cortical development, especially in the maintenance of radial glia. This is Coiled-coil domain-containing protein 85C (CCDC85C) from Homo sapiens (Human).